Here is a 259-residue protein sequence, read N- to C-terminus: BTB/POZ domain-containing protein KCTD4 (259 aa).

Positions 33-134 constitute a BTB domain; that stretch reads TLMTLNVGGY…EVKSRWEKEQ (102 aa).

The protein is BTB/POZ domain-containing protein KCTD4 (Kctd4) of Mus musculus (Mouse).